A 577-amino-acid chain; its full sequence is Arginine--tRNA ligase (577 aa).

The short motif at 122 to 132 is the 'HIGH' region element; the sequence is PNVAKEMHVGH.

The protein belongs to the class-I aminoacyl-tRNA synthetase family. In terms of assembly, monomer.

It localises to the cytoplasm. It catalyses the reaction tRNA(Arg) + L-arginine + ATP = L-arginyl-tRNA(Arg) + AMP + diphosphate. The sequence is that of Arginine--tRNA ligase from Escherichia coli O7:K1 (strain IAI39 / ExPEC).